The sequence spans 192 residues: MQRVSRLKRELQLLNKEPPPGVICWQNESNMDDLRAQIIGGSGSPYEGGIFNLEIIVPERYPFEPPKIRFLTPIYHPNIDSAGRICLDILKLPPKGAWRPALNISTVLTSIQLLMSEPNPDDPLMADISSEFKYNRAVFFSNAKKWTEKHALPAPQGSDKESQEKSGSSEGTSHKRKSAEIAEESKKPCREP.

The 151-residue stretch at 2-152 (QRVSRLKREL…AKKWTEKHAL (151 aa)) folds into the UBC core domain. Catalysis depends on cysteine 86, which acts as the Glycyl thioester intermediate. The disordered stretch occupies residues 150–192 (HALPAPQGSDKESQEKSGSSEGTSHKRKSAEIAEESKKPCREP). Residues 178-192 (SAEIAEESKKPCREP) are compositionally biased toward basic and acidic residues.

This sequence belongs to the ubiquitin-conjugating enzyme family.

The protein localises to the nucleus. It catalyses the reaction S-ubiquitinyl-[E1 ubiquitin-activating enzyme]-L-cysteine + [E2 ubiquitin-conjugating enzyme]-L-cysteine = [E1 ubiquitin-activating enzyme]-L-cysteine + S-ubiquitinyl-[E2 ubiquitin-conjugating enzyme]-L-cysteine.. It participates in protein modification; protein ubiquitination. In terms of biological role, accepts ubiquitin from the E1 complex and catalyzes its covalent attachment to other proteins. Catalyzes monoubiquitination. Involved in DNA repair. The protein is Ubiquitin-conjugating enzyme E2 T (ube2t) of Xenopus laevis (African clawed frog).